Here is a 325-residue protein sequence, read N- to C-terminus: Ribosomal RNA small subunit methyltransferase H (325 aa).

S-adenosyl-L-methionine-binding positions include 39–41 (GGH), Asp59, Phe90, Asp108, and Gln115.

Belongs to the methyltransferase superfamily. RsmH family.

The protein localises to the cytoplasm. The catalysed reaction is cytidine(1402) in 16S rRNA + S-adenosyl-L-methionine = N(4)-methylcytidine(1402) in 16S rRNA + S-adenosyl-L-homocysteine + H(+). Specifically methylates the N4 position of cytidine in position 1402 (C1402) of 16S rRNA. In Leptothrix cholodnii (strain ATCC 51168 / LMG 8142 / SP-6) (Leptothrix discophora (strain SP-6)), this protein is Ribosomal RNA small subunit methyltransferase H.